The sequence spans 518 residues: Putative transposase for insertion sequence IS408 (518 aa).

An HTH IS408-type domain is found at 11 to 94; it reads LKEVLRLKWA…PDYTALHREL (84 aa). The segment at residues 23-44 is a DNA-binding region (H-T-H motif); it reads LTHRQISRAIGISVGAVSKFAA. Positions 140–335 constitute an Integrase catalytic domain; that stretch reads QQHRAGEKLF…LPVRRYEIAT (196 aa). A disordered region spans residues 496–518; that stretch reads LPTTPAEWRSPEHENVRGPDYYH. Residues 504–518 show a composition bias toward basic and acidic residues; it reads RSPEHENVRGPDYYH.

It belongs to the transposase IS21/IS408/IS1162 family.

Required for the transposition of the insertion element. The protein is Putative transposase for insertion sequence IS408 of Burkholderia multivorans (strain ATCC 17616 / 249).